A 432-amino-acid polypeptide reads, in one-letter code: Short/branched chain specific acyl-CoA dehydrogenase, mitochondrial (432 aa).

A mitochondrion-targeting transit peptide spans 1-33 (MAVSAFQLWRAGGLLRRNFLTHSSSWKIPPRVL). Lys-70 carries the post-translational modification N6-acetyllysine; alternate. Lys-70 is subject to N6-succinyllysine; alternate. Residues 174 to 183 (FCLSEAGAGS) and 207 to 209 (WIS) each bind FAD. Ser-183 serves as a coordination point for substrate. At Ser-183 the chain carries Phosphoserine. Tyr-229 lines the substrate pocket. Lys-278 carries the post-translational modification N6-succinyllysine. Tyr-283 serves as a coordination point for substrate. Lys-284 is modified (N6-acetyllysine; alternate). N6-succinyllysine; alternate is present on Lys-284. Residue 291–294 (NEGR) coordinates substrate. Residues Arg-319, Gln-330, and 387–391 (EWMGG) each bind FAD. Glu-414 serves as the catalytic Proton acceptor. An FAD-binding site is contributed by 416-418 (TSN). Lys-426 bears the N6-acetyllysine mark.

Belongs to the acyl-CoA dehydrogenase family. Homotetramer. FAD is required as a cofactor. As to expression, ubiquitously expressed.

The protein localises to the mitochondrion matrix. The enzyme catalyses 2-methylbutanoyl-CoA + oxidized [electron-transfer flavoprotein] + H(+) = (2E)-2-methylbut-2-enoyl-CoA + reduced [electron-transfer flavoprotein]. It catalyses the reaction (2S)-2-methylbutanoyl-CoA + oxidized [electron-transfer flavoprotein] + H(+) = (2E)-2-methylbut-2-enoyl-CoA + reduced [electron-transfer flavoprotein]. The catalysed reaction is (2R)-2-methylbutanoyl-CoA + oxidized [electron-transfer flavoprotein] + H(+) = ethylacryloyl-CoA + reduced [electron-transfer flavoprotein]. It carries out the reaction butanoyl-CoA + oxidized [electron-transfer flavoprotein] + H(+) = (2E)-butenoyl-CoA + reduced [electron-transfer flavoprotein]. The enzyme catalyses 2-methylpropanoyl-CoA + oxidized [electron-transfer flavoprotein] + H(+) = 2-methylpropenoyl-CoA + reduced [electron-transfer flavoprotein]. It catalyses the reaction hexanoyl-CoA + oxidized [electron-transfer flavoprotein] + H(+) = (2E)-hexenoyl-CoA + reduced [electron-transfer flavoprotein]. The catalysed reaction is valproyl-CoA + oxidized [electron-transfer flavoprotein] + H(+) = (2E)-2-propylpent-2-enoyl-CoA + reduced [electron-transfer flavoprotein]. Its pathway is lipid metabolism; mitochondrial fatty acid beta-oxidation. It participates in amino-acid degradation; L-isoleucine degradation. Its activity is regulated as follows. Inhibited by N-ethylmaleimide, hydroxymercuribenzoate, methyl mercury iodide and heavy metals such as Hg2+, Cu2+, and Ag2+. Functionally, short and branched chain specific acyl-CoA dehydrogenase that catalyzes the removal of one hydrogen from C-2 and C-3 of the fatty acyl-CoA thioester, resulting in the formation of trans-2-enoyl-CoA. Among the different mitochondrial acyl-CoA dehydrogenases, acts specifically on short and branched chain acyl-CoA derivatives such as (S)-2-methylbutyryl-CoA as well as short straight chain acyl-CoAs such as butyryl-CoA. Plays an important role in the metabolism of L-isoleucine by catalyzing the dehydrogenation of 2-methylbutyryl-CoA, one of the steps of the L-isoleucine catabolic pathway. Can also act on valproyl-CoA, a metabolite of the valproic acid drug. This Rattus norvegicus (Rat) protein is Short/branched chain specific acyl-CoA dehydrogenase, mitochondrial.